The sequence spans 257 residues: Zinc finger protein 8 (257 aa).

3 disordered regions span residues 48–92 (GDNS…NNNN), 108–128 (QALG…KRGS), and 214–238 (GVYS…PNNW). Positions 50-65 (NSDNLSAEPSDHQTTT) are enriched in polar residues. A compositionally biased stretch (basic and acidic residues) spans 66-92 (KNDESSENIKDKDKEKDKDKDKDNNNN). The segment at 95 to 117 (FECHYCFRNFPTSQALGGHQNAH) adopts a C2H2-type zinc-finger fold. The segment covering 115 to 126 (NAHKRERQHAKR) has biased composition (basic residues).

Expressed in developing cauline leaves.

Its subcellular location is the nucleus. Probable transcription factor required for the initiation of inflorescence trichomes in response to gibberellin and cytokinin. Is not involved in the regulation of trichome branching. Is functionally equivalent to GIS2. Acts as a negative regulator of abscisic acid (ABA) signaling during germination and early seedling development. The protein is Zinc finger protein 8 of Arabidopsis thaliana (Mouse-ear cress).